Consider the following 390-residue polypeptide: tRNA (guanine(26)-N(2))-dimethyltransferase (390 aa).

Residues 4 to 378 (HIIEEGLVKI…MPLDELKQLI (375 aa)) enclose the Trm1 methyltransferase domain. 5 residues coordinate S-adenosyl-L-methionine: R37, R67, D85, D112, and A113. C245, C248, C265, and C268 together coordinate Zn(2+).

Belongs to the class I-like SAM-binding methyltransferase superfamily. Trm1 family.

The catalysed reaction is guanosine(26) in tRNA + 2 S-adenosyl-L-methionine = N(2)-dimethylguanosine(26) in tRNA + 2 S-adenosyl-L-homocysteine + 2 H(+). In terms of biological role, dimethylates a single guanine residue at position 26 of a number of tRNAs using S-adenosyl-L-methionine as donor of the methyl groups. This is tRNA (guanine(26)-N(2))-dimethyltransferase from Methanosphaera stadtmanae (strain ATCC 43021 / DSM 3091 / JCM 11832 / MCB-3).